The primary structure comprises 235 residues: Small ribosomal subunit protein uS2 (235 aa).

It belongs to the universal ribosomal protein uS2 family.

The sequence is that of Small ribosomal subunit protein uS2 from Thermoanaerobacter sp. (strain X514).